Consider the following 363-residue polypeptide: MLIRLLLLVICLAGPGVAEEIRIKDLVRFDGVRGNDLLGYGLVVGLNGTGDGLRNAPFTEDIMSNLLERLGVNVTGEQYRPKNVAAVFVTATLPPFARAGAQIDVTVSAMGDAKSLLGGTLVMTPLNGADGQIYAVAQGTIIAGGVSAEGQAARVVQGVPTAGTIPEGARVEREVEFEFARLDRVRLALRSPDFTTAGRIEDRINRELGRGVATMLDAGTVSLDLGRLGPPARVMGRIENLEVVPETVARVVVDQRSGTIVMGEDVRISRVAVAQGGLTLRVEEQPMVVQPNPFSRGETVVVPRTTASIQQRPGTGLAEIPAETSLSRVVAGLNALGVAPNDMIDILKSIHAAGALHAEFIVR.

The first 18 residues, 1–18 (MLIRLLLLVICLAGPGVA), serve as a signal peptide directing secretion.

The protein belongs to the FlgI family. The basal body constitutes a major portion of the flagellar organelle and consists of four rings (L,P,S, and M) mounted on a central rod.

The protein localises to the periplasm. It localises to the bacterial flagellum basal body. Assembles around the rod to form the L-ring and probably protects the motor/basal body from shearing forces during rotation. The sequence is that of Flagellar P-ring protein 2 from Cereibacter sphaeroides (strain ATCC 17023 / DSM 158 / JCM 6121 / CCUG 31486 / LMG 2827 / NBRC 12203 / NCIMB 8253 / ATH 2.4.1.) (Rhodobacter sphaeroides).